Reading from the N-terminus, the 336-residue chain is Aspartate--ammonia ligase (336 aa).

It belongs to the class-II aminoacyl-tRNA synthetase family. AsnA subfamily.

It is found in the cytoplasm. It carries out the reaction L-aspartate + NH4(+) + ATP = L-asparagine + AMP + diphosphate + H(+). Its pathway is amino-acid biosynthesis; L-asparagine biosynthesis; L-asparagine from L-aspartate (ammonia route): step 1/1. The chain is Aspartate--ammonia ligase from Lactobacillus johnsonii (strain CNCM I-12250 / La1 / NCC 533).